We begin with the raw amino-acid sequence, 472 residues long: Hepatocyte nuclear factor 3-alpha (472 aa).

The fork-head DNA-binding region spans 169–260 (AKPPYSYISL…GNMFENGCYL (92 aa)). The tract at residues 269–392 (EKQPGAGGGG…ESQLHLKGDP (124 aa)) is disordered. Residues 273-289 (GAGGGGGSGSGGSGAKG) are compositionally biased toward gly residues. Phosphoserine is present on residues S307 and S331. Low complexity-rich tracts occupy residues 322–332 (GAPAPGPAASP) and 351–366 (TPAS…GPGA).

Binds DNA as a monomer. Interacts with FOXA2. Interacts with NKX2-1. Interacts with HDAC7. Interacts with the histone H3-H4 heterodimer. Associates with nucleosomes containing histone H2A. Interacts with AR. Interacts with NR0B2. Highly expressed in prostate and ESR1-positive breast tumors. Overexpressed in esophageal and lung adenocarcinomas.

The protein resides in the nucleus. Its function is as follows. Transcription factor that is involved in embryonic development, establishment of tissue-specific gene expression and regulation of gene expression in differentiated tissues. Is thought to act as a 'pioneer' factor opening the compacted chromatin for other proteins through interactions with nucleosomal core histones and thereby replacing linker histones at target enhancer and/or promoter sites. Binds DNA with the consensus sequence 5'-[AC]A[AT]T[AG]TT[GT][AG][CT]T[CT]-3'. Proposed to play a role in translating the epigenetic signatures into cell type-specific enhancer-driven transcriptional programs. Its differential recruitment to chromatin is dependent on distribution of histone H3 methylated at 'Lys-5' (H3K4me2) in estrogen-regulated genes. Involved in the development of multiple endoderm-derived organ systems such as liver, pancreas, lung and prostate; FOXA1 and FOXA2 seem to have at least in part redundant roles. Modulates the transcriptional activity of nuclear hormone receptors. Is involved in ESR1-mediated transcription; required for ESR1 binding to the NKX2-1 promoter in breast cancer cells; binds to the RPRM promoter and is required for the estrogen-induced repression of RPRM. Involved in regulation of apoptosis by inhibiting the expression of BCL2. Involved in cell cycle regulation by activating expression of CDKN1B, alone or in conjunction with BRCA1. Originally described as a transcription activator for a number of liver genes such as AFP, albumin, tyrosine aminotransferase, PEPCK, etc. Interacts with the cis-acting regulatory regions of these genes. Involved in glucose homeostasis. This chain is Hepatocyte nuclear factor 3-alpha (FOXA1), found in Homo sapiens (Human).